Reading from the N-terminus, the 756-residue chain is Subtilisin-like protease SBT3.9 (756 aa).

The first 25 residues, 1-25 (MSKTILFLALFLSIVLNVQISFVVA), serve as a signal peptide directing secretion. Positions 26–108 (ESKVYVVYLG…VIPNTLYEMT (83 aa)) are cleaved as a propeptide — activation peptide. The region spanning 29 to 106 (VYVVYLGEKE…VQVIPNTLYE (78 aa)) is the Inhibitor I9 domain. A Peptidase S8 domain is found at 112-603 (TWDYLGVSPG…GGLINPEKAV (492 aa)). The active-site Charge relay system is Asp-142. Asn-175 and Asn-202 each carry an N-linked (GlcNAc...) asparagine glycan. His-218 functions as the Charge relay system in the catalytic mechanism. N-linked (GlcNAc...) asparagine glycosylation is found at Asn-233, Asn-357, Asn-395, and Asn-519. One can recognise a PA domain in the interval 386-460 (DCEKLSANPN…ELGTDILFYI (75 aa)). The Charge relay system role is filled by Ser-534.

The protein belongs to the peptidase S8 family.

The protein resides in the secreted. The protein is Subtilisin-like protease SBT3.9 of Arabidopsis thaliana (Mouse-ear cress).